The following is an 888-amino-acid chain: Patched domain-containing protein 1 (888 aa).

A helical membrane pass occupies residues 20-40; that stretch reads FIASHPVFFASAPVLISILLG. Asn-77, Asn-133, and Asn-167 each carry an N-linked (GlcNAc...) asparagine glycan. Residues 268 to 427 form the SSD domain; that stretch reads SERYLVTSLI…LSFYGSSLVF (160 aa). 2 helical membrane-spanning segments follow: residues 273 to 293 and 298 to 318; these read VTSL…QDCV and WLGL…AGII. N-linked (GlcNAc...) asparagine glycosylation is found at Asn-319 and Asn-326. 4 helical membrane passes run 328 to 348, 373 to 393, 407 to 427, and 502 to 522; these read TFLG…FEML, LSFS…ASPF, CIAI…SLVF, and PFVV…YLQV. Asn-568, Asn-599, and Asn-608 each carry an N-linked (GlcNAc...) asparagine glycan. 2 consecutive transmembrane segments (helical) span residues 707-727 and 738-758; these read ALFL…NVWI and VIGF…LCLI. N-linked (GlcNAc...) asparagine glycosylation is present at Asn-762. Residues 795 to 815 traverse the membrane as a helical segment; it reads GVAILQSYLCYIVGLFPLAAV. N-linked (GlcNAc...) asparagine glycosylation occurs at Asn-818. The chain crosses the membrane as a helical span at residues 826-846; that stretch reads CLFLIAFVTFFHCFAILPVIL.

Belongs to the patched family. As to expression, broadly expressed in the brain. Selectively expressed in the thalamic reticular nucleus (TRN) in early development and continues to be enriched in this structure throughout adult life.

It localises to the cell membrane. The protein resides in the cell projection. It is found in the dendritic spine. Required for the development and function of the thalamic reticular nucleus (TRN), a part of the thalamus that is critical for thalamocortical transmission, generation of sleep rhythms, sensorimotor processing and attention. Can bind cholesterol in vitro. In Mus musculus (Mouse), this protein is Patched domain-containing protein 1.